We begin with the raw amino-acid sequence, 246 residues long: MKYDIIGDIHGCLQEFQNLTEKLGYNWSSGLPVHPDQRKLAFVGDITDRGPHSLRMIEIVWELVIHKKVAYYAPGNHCNKLYRFFLGRNVTIAHGLETTVAEYEALPSHKQNMIKEKFITLYEQSPLYHILDEKRLLVCHAGIRQDYIGRQDKKVQTFVLYGDITGEKHADGSPVRRDWAKEYKGTTWIVYGHTPVKEPRFVNHTVNIDTGAVFGGRLTALRYPEMETVSVPSSLPFVPEKFRPIS.

It belongs to the PrpE family. The cofactor is Ni(2+).

The enzyme catalyses P(1),P(4)-bis(5'-guanosyl) tetraphosphate + H2O = GMP + GTP + 2 H(+). In terms of biological role, asymmetrically hydrolyzes Ap4p to yield AMP and ATP. In Bacillus anthracis (strain A0248), this protein is Bis(5'-nucleosyl)-tetraphosphatase PrpE [asymmetrical].